The primary structure comprises 540 residues: Phosphoenolpyruvate carboxykinase (ATP) (540 aa).

A substrate-binding site is contributed by arginine 65. Residue lysine 87 is modified to N6-acetyllysine. 2 residues coordinate substrate: tyrosine 207 and lysine 213. ATP contacts are provided by residues lysine 213, histidine 232, and 248–256 (GLSGTGKTT). Positions 213 and 232 each coordinate Mn(2+). Aspartate 269 is a Mn(2+) binding site. Residues glutamate 297, arginine 333, 449–450 (RI), and threonine 455 contribute to the ATP site. Arginine 333 provides a ligand contact to substrate. N6-acetyllysine is present on lysine 523.

The protein belongs to the phosphoenolpyruvate carboxykinase (ATP) family. As to quaternary structure, monomer. Mn(2+) is required as a cofactor.

The protein localises to the cytoplasm. The enzyme catalyses oxaloacetate + ATP = phosphoenolpyruvate + ADP + CO2. It participates in carbohydrate biosynthesis; gluconeogenesis. In terms of biological role, involved in the gluconeogenesis. Catalyzes the conversion of oxaloacetate (OAA) to phosphoenolpyruvate (PEP) through direct phosphoryl transfer between the nucleoside triphosphate and OAA. In Escherichia coli O6:H1 (strain CFT073 / ATCC 700928 / UPEC), this protein is Phosphoenolpyruvate carboxykinase (ATP).